The sequence spans 340 residues: Myomesin-1 (340 aa).

Residues 177–212 (AEKARLKSRPSAPXTGQIIVTEEEPSEEAGTENXQR) are disordered. The segment covering 197 to 206 (TEEEPSEEAG) has biased composition (acidic residues).

As to quaternary structure, homodimer. Interacts with TTN/titin and PNKD. In terms of tissue distribution, seems to be expressed in all cardiac and skeletal fibers.

It localises to the cytoplasm. Its subcellular location is the myofibril. It is found in the sarcomere. The protein localises to the m line. Major component of the vertebrate myofibrillar M band. Binds myosin, titin, and light meromyosin. This binding is dose dependent. In Bos taurus (Bovine), this protein is Myomesin-1 (MYOM1).